The sequence spans 111 residues: TPR repeat-containing protein associated with Hsp90 (111 aa).

At Ser2 the chain carries N-acetylserine. TPR repeat units lie at residues 4–37 and 39–71; these read FEKQKEQGNSLFKQGLYREAVHCYDQLITAQPQN and VGYSNKAMALIKLGEYTQAIQMCQQGLRYTSTA.

In terms of assembly, component of the R2TP complex composed at least of RVB1, RVB2, TAH1 and PIH1. Also interacts with HSP90.

It localises to the cytoplasm. Its subcellular location is the nucleus. This is TPR repeat-containing protein associated with Hsp90 (TAH1) from Saccharomyces cerevisiae (strain ATCC 204508 / S288c) (Baker's yeast).